The sequence spans 277 residues: Methylamine utilization protein MauF (277 aa).

Transmembrane regions (helical) follow at residues 33–53, 59–79, 111–131, 132–152, 179–199, 205–225, and 257–277; these read IAVL…LASA, LWAV…WSPC, YGLG…IAGF, SGFG…YGAH, WVIG…YVQT, MTLA…VALF, and ALAD…LALI.

Its subcellular location is the cell membrane. Its pathway is one-carbon metabolism; methylamine degradation. The polypeptide is Methylamine utilization protein MauF (mauF) (Paracoccus denitrificans).